Consider the following 588-residue polypeptide: UvrABC system protein C (588 aa).

The 78-residue stretch at 12 to 89 (SKPGCYLYLN…IKKYRPKYNV (78 aa)) folds into the GIY-YIG domain. Positions 194 to 229 (NEVKTLLTNQMHKAAENLQFEEAQRIKEQIISLDFT) constitute a UVR domain.

This sequence belongs to the UvrC family. As to quaternary structure, interacts with UvrB in an incision complex.

It is found in the cytoplasm. The UvrABC repair system catalyzes the recognition and processing of DNA lesions. UvrC both incises the 5' and 3' sides of the lesion. The N-terminal half is responsible for the 3' incision and the C-terminal half is responsible for the 5' incision. This chain is UvrABC system protein C, found in Mesoplasma florum (strain ATCC 33453 / NBRC 100688 / NCTC 11704 / L1) (Acholeplasma florum).